The sequence spans 95 residues: FXYD domain-containing ion transport regulator 6 (95 aa).

Residues 1–18 (MELVLVFLCSLLAPTVLA) form the signal peptide. Topologically, residues 19–35 (SAAEKEKEMDPFHYDYQ) are extracellular. The helical transmembrane segment at 36-58 (TLRIGGLVFAVVLFSVGILLILS) threads the bilayer. The Cytoplasmic segment spans residues 59-95 (RRCKCSFNQKPRAPGDEEAQVENLITANATEPQKAEN).

Belongs to the FXYD family. Regulatory subunit of the sodium/potassium-transporting ATPase which is composed of a catalytic alpha subunit, a non-catalytic beta subunit and an additional regulatory subunit. The regulatory subunit, a member of the FXYD protein family, modulates the enzymatic activity in a tissue- and isoform-specific way by changing affinities of the Na+/K+-ATPase toward Na(+), K(+) or ATP.

It is found in the cell membrane. Associates with and regulates the activity of the sodium/potassium-transporting ATPase (NKA) which catalyzes the hydrolysis of ATP coupled with the exchange of Na(+) and K(+) ions across the plasma membrane. Reduces the apparent affinity for intracellular Na(+) with no change in the apparent affinity for extracellular K(+). In addition to modulating NKA kinetics, may also function as a regulator of NKA localization to the plasma membrane. This Pongo abelii (Sumatran orangutan) protein is FXYD domain-containing ion transport regulator 6 (FXYD6).